The following is a 273-amino-acid chain: Diaminopimelate epimerase (273 aa).

Substrate is bound by residues asparagine 11 and asparagine 60. The active-site Proton donor is cysteine 69. Substrate-binding positions include 70-71 (GN), asparagine 181, and 199-200 (ER). The Proton acceptor role is filled by cysteine 209. 210-211 (GT) contributes to the substrate binding site.

This sequence belongs to the diaminopimelate epimerase family. Homodimer.

The protein localises to the cytoplasm. It catalyses the reaction (2S,6S)-2,6-diaminopimelate = meso-2,6-diaminopimelate. It participates in amino-acid biosynthesis; L-lysine biosynthesis via DAP pathway; DL-2,6-diaminopimelate from LL-2,6-diaminopimelate: step 1/1. Catalyzes the stereoinversion of LL-2,6-diaminopimelate (L,L-DAP) to meso-diaminopimelate (meso-DAP), a precursor of L-lysine and an essential component of the bacterial peptidoglycan. This is Diaminopimelate epimerase from Helicobacter pylori (strain ATCC 700392 / 26695) (Campylobacter pylori).